The following is a 173-amino-acid chain: Alpha-crystallin A chain (173 aa).

M1 is modified (N-acetylmethionine). Residues 1–63 (MDVTIQHPWF…RTVLDSGVSE (63 aa)) are required for complex formation with BFSP1 and BFSP2. The residue at position 6 (Q6) is a Deamidated glutamine; partial. The residue at position 45 (S45) is a Phosphoserine. Position 50 is a deamidated glutamine; partial (Q50). Positions 52–162 (LFRTVLDSGV…GHSERAIPVS (111 aa)) constitute a sHSP domain. The residue at position 70 (K70) is an N6-acetyllysine. Q90 carries the post-translational modification Deamidated glutamine; partial. K99 carries the post-translational modification N6-acetyllysine. Residue H100 coordinates Zn(2+). The residue at position 101 (N101) is a Deamidated asparagine; partial. E102 and H107 together coordinate Zn(2+). S122 carries the phosphoserine modification. Deamidated asparagine; partial is present on N123. The segment at 144-173 (PKVQSGLDAGHSERAIPVSREEKPSSAPSS) is disordered. Q147 bears the Deamidated glutamine; partial mark. The span at 153-167 (GHSERAIPVSREEKP) shows a compositional bias: basic and acidic residues. H154 serves as a coordination point for Zn(2+). Residue S162 is glycosylated (O-linked (GlcNAc) serine).

It belongs to the small heat shock protein (HSP20) family. In terms of assembly, heteromer composed of three CRYAA and one CRYAB subunits. Inter-subunit bridging via zinc ions enhances stability, which is crucial as there is no protein turn over in the lens. Can also form homodimers and homotetramers (dimers of dimers) which serve as the building blocks of homooligomers. Within homooligomers, the zinc-binding motif is created from residues of 3 different molecules. His-100 and Glu-102 from one molecule are ligands of the zinc ion, and His-107 and His-154 residues from additional molecules complete the site with tetrahedral coordination geometry. Part of a complex required for lens intermediate filament formation composed of BFSP1, BFSP2 and CRYAA. In terms of processing, acetylation at Lys-70 may increase chaperone activity. Post-translationally, undergoes age-dependent proteolytical cleavage at the C-terminus.

Its subcellular location is the cytoplasm. The protein localises to the nucleus. Its function is as follows. Contributes to the transparency and refractive index of the lens. Acts as a chaperone, preventing aggregation of various proteins under a wide range of stress conditions. Required for the correct formation of lens intermediate filaments as part of a complex composed of BFSP1, BFSP2 and CRYAA. The protein is Alpha-crystallin A chain (CRYAA) of Otolemur crassicaudatus (Brown greater galago).